A 543-amino-acid chain; its full sequence is Chaperonin GroEL (543 aa).

ATP-binding positions include 30-33 (TLGP), Lys-51, 87-91 (DGTTT), Gly-415, 480-482 (DAA), and Asp-496.

The protein belongs to the chaperonin (HSP60) family. In terms of assembly, forms a cylinder of 14 subunits composed of two heptameric rings stacked back-to-back. Interacts with the co-chaperonin GroES.

Its subcellular location is the cytoplasm. It catalyses the reaction ATP + H2O + a folded polypeptide = ADP + phosphate + an unfolded polypeptide.. In terms of biological role, together with its co-chaperonin GroES, plays an essential role in assisting protein folding. The GroEL-GroES system forms a nano-cage that allows encapsulation of the non-native substrate proteins and provides a physical environment optimized to promote and accelerate protein folding. This Hydrogenobaculum sp. (strain Y04AAS1) protein is Chaperonin GroEL.